Consider the following 344-residue polypeptide: uncharacterized protein (344 aa).

Residues 1–27 (MKKWLIIAVSLAIAIVLFMYTKGEAKA) form the signal peptide. The GH18 domain maps to 29–344 (GMTVGYTTGD…FWKAIRKGTK (316 aa)). E140 acts as the Proton donor in catalysis.

Belongs to the glycosyl hydrolase 18 family.

This is an uncharacterized protein from Bacillus subtilis (strain 168).